The chain runs to 740 residues: ATP-dependent RNA helicase DDX1 (740 aa).

Positions 1–448 are interaction with dsRNA; the sequence is MAAFSEMGVM…ETVHHVVVIV (448 aa). The Helicase ATP-binding domain occupies 2-428; sequence AAFSEMGVMP…SEKIMHFPTW (427 aa). ATP is bound at residue 46-53; it reads AETGSGKT. A B30.2/SPRY domain is found at 70 to 247; sequence DQMEGKKGKA…LKFNFGEEDF (178 aa). The short motif at 370–373 is the DEAD box element; that stretch reads DEAD. A Helicase C-terminal domain is found at 493–681; it reads KGEYTVRAIK…QVEPDIKVPV (189 aa).

The protein belongs to the DEAD box helicase family. DDX1 subfamily. In terms of tissue distribution, detected in embryonic retina, brain, heart and liver (at protein level). Detected in embryonic retina, brain, heart, kidney and liver.

The protein localises to the nucleus. It localises to the cytoplasm. It is found in the cytoplasmic granule. The protein resides in the cytosol. Its subcellular location is the mitochondrion. It catalyses the reaction ATP + H2O = ADP + phosphate + H(+). In terms of biological role, acts as an ATP-dependent RNA helicase, able to unwind both RNA-RNA and RNA-DNA duplexes. Possesses 5' single-stranded RNA overhang nuclease activity. Acts as a positive regulator of transcription. May be involved in 3'-end cleavage and polyadenylation of pre-mRNAs. Binds DNA and RNA. Component of the tRNA-splicing ligase complex required to facilitate the enzymatic turnover of catalytic subunit RTCB. Binds (via helicase ATP-binding domain) on both short and long poly(I:C) dsRNA. This chain is ATP-dependent RNA helicase DDX1 (DDX1), found in Gallus gallus (Chicken).